We begin with the raw amino-acid sequence, 647 residues long: Protein cueball (647 aa).

Residues Met-1–Ala-22 form the signal peptide. The Extracellular segment spans residues Ile-23 to Asn-534. Residues Asn-80 and Asn-106 are each glycosylated (N-linked (GlcNAc...) asparagine). 3 LDL-receptor class B repeats span residues Arg-119–Arg-166, Arg-167–Ser-211, and Asp-212–Ala-257. Asn-175 carries N-linked (GlcNAc...) asparagine glycosylation. An N-linked (GlcNAc...) asparagine glycan is attached at Asn-316. 2 consecutive EGF-like domains span residues Asp-365–Glu-401 and Glu-436–Glu-473. 5 cysteine pairs are disulfide-bonded: Cys-376–Cys-389, Cys-391–Cys-400, Cys-440–Cys-450, Cys-444–Cys-461, and Cys-463–Cys-472. Asn-475 is a glycosylation site (N-linked (GlcNAc...) asparagine). A helical membrane pass occupies residues Val-535–His-555. At Gly-556–Tyr-647 the chain is on the cytoplasmic side.

The protein belongs to the cueball family.

It localises to the cell membrane. Its function is as follows. Has a role in spermatogenesis and oogenesis. This chain is Protein cueball, found in Drosophila persimilis (Fruit fly).